Reading from the N-terminus, the 83-residue chain is uncharacterized protein (83 aa).

This is an uncharacterized protein from Thermoproteus tenax (TTV1).